The following is a 309-amino-acid chain: uncharacterized protein (309 aa).

Belongs to the anthranilate phosphoribosyltransferase family.

This is an uncharacterized protein from Aquifex aeolicus (strain VF5).